The following is a 177-amino-acid chain: Thymidine kinase (177 aa).

An ATP-binding site is contributed by 11-18 (GPMFSGKS). Residue Glu-83 is the Proton acceptor of the active site. A substrate-binding site is contributed by Phe-113. Residues Cys-138 and Cys-141 each coordinate Zn(2+). 157–161 (IEIIG) is a binding site for substrate. Residues Cys-170 and Cys-173 each contribute to the Zn(2+) site.

This sequence belongs to the thymidine kinase family. In terms of assembly, homotetramer. Two molecules of substrate bind to each enzyme tetramer.

It catalyses the reaction thymidine + ATP = dTMP + ADP + H(+). In terms of biological role, phosphorylates thymidine and thymidine analogs, such as azidothymidine (AZT). Part of the salvage pathway for pyrimidine deoxyribonucleotide synthesis. In Vaccinia virus (strain Copenhagen) (VACV), this protein is Thymidine kinase (OPG101).